Consider the following 427-residue polypeptide: Glutamate-1-semialdehyde 2,1-aminomutase (427 aa).

Lysine 265 carries the post-translational modification N6-(pyridoxal phosphate)lysine.

It belongs to the class-III pyridoxal-phosphate-dependent aminotransferase family. HemL subfamily. In terms of assembly, homodimer. Pyridoxal 5'-phosphate serves as cofactor.

It is found in the cytoplasm. It catalyses the reaction (S)-4-amino-5-oxopentanoate = 5-aminolevulinate. It participates in porphyrin-containing compound metabolism; protoporphyrin-IX biosynthesis; 5-aminolevulinate from L-glutamyl-tRNA(Glu): step 2/2. In Pseudomonas putida (strain W619), this protein is Glutamate-1-semialdehyde 2,1-aminomutase.